A 536-amino-acid chain; its full sequence is Thiamine transport system permease protein ThiP (536 aa).

Transmembrane regions (helical) follow at residues 12–32, 58–78, 95–115, 134–154, 199–219, 240–260, 293–313, 334–354, 374–394, 404–424, 463–483, and 506–526; these read WLIP…AAFL, FSFW…IFLA, LCAM…LSVY, FSPY…LPMA, VAAL…SLGG, PARA…LVLL, VLIV…IVDG, SLRI…MLLW, SGML…FLLL, ADGI…LKVL, AQAL…VALF, and DGAV…TVIE. Positions 56–261 constitute an ABC transmembrane type-1 1 domain; the sequence is VRFSFWQAFL…VCCLGLVLLS (206 aa). In terms of domain architecture, ABC transmembrane type-1 2 spans 331–525; the sequence is LWTSLRIALA…LLCFLLFTVI (195 aa).

The protein belongs to the binding-protein-dependent transport system permease family. CysTW subfamily. In terms of assembly, the complex is composed of two ATP-binding proteins (ThiQ), two transmembrane proteins (ThiP) and a solute-binding protein (ThiB).

It localises to the cell inner membrane. Transport is inhibited by the sulfhydryl-specific modifier N-ethylmaleimide. Its function is as follows. Part of the ABC transporter complex ThiBPQ involved in thiamine import. Probably responsible for the translocation of the substrate across the membrane. The sequence is that of Thiamine transport system permease protein ThiP (thiP) from Escherichia coli (strain K12).